A 372-amino-acid chain; its full sequence is THAP domain-containing protein 5 (372 aa).

The segment at 1–85 (MTRYCAATRC…LKPNAIPTLF (85 aa)) adopts a THAP-type zinc-finger fold. The stretch at 306 to 362 (TDRHYLRQKIAKLQSKIAVLEAQENATLSRLRLLESVIAKLKQENLLSDEKLKILEN) forms a coiled coil.

The protein resides in the nucleus. The sequence is that of THAP domain-containing protein 5 (thap5) from Xenopus laevis (African clawed frog).